The following is a 124-amino-acid chain: Small ribosomal subunit protein uS12 (124 aa).

Asp89 is modified (3-methylthioaspartic acid).

It belongs to the universal ribosomal protein uS12 family. Part of the 30S ribosomal subunit. Contacts proteins S8 and S17. May interact with IF1 in the 30S initiation complex.

With S4 and S5 plays an important role in translational accuracy. Its function is as follows. Interacts with and stabilizes bases of the 16S rRNA that are involved in tRNA selection in the A site and with the mRNA backbone. Located at the interface of the 30S and 50S subunits, it traverses the body of the 30S subunit contacting proteins on the other side and probably holding the rRNA structure together. The combined cluster of proteins S8, S12 and S17 appears to hold together the shoulder and platform of the 30S subunit. This chain is Small ribosomal subunit protein uS12, found in Treponema pallidum subsp. pallidum (strain SS14).